Consider the following 1463-residue polypeptide: Collagen alpha-1(III) chain (1463 aa).

The N-terminal stretch at 1–23 (MMSFVQCGTWFLLTLLHPSLILA) is a signal peptide. Residues 24-154 (QQSNVDELGC…CPTGGQNYSP (131 aa)) constitute a propeptide, N-terminal propeptide. The VWFC domain maps to 31 to 90 (LGCNYLGQSYESRDVWKPEPCQICVCDSGSVLCDDIMCDDEPLDCPNPEIPFGECCAICP). A disordered region spans residues 97-1195 (PVIPDGNRPQ…PGPPGAPGPC (1099 aa)). Over residues 147-156 (TGGQNYSPQF) the composition is skewed to polar residues. The segment at 155 to 169 (QFDSYDVKSGVGGMG) is nonhelical region (N-terminal). The segment covering 164–173 (GVGGMGGYPG) has biased composition (gly residues). Positions 170–1195 (GYPGPAGPPG…PGPPGAPGPC (1026 aa)) are triple-helical region. Pro residues predominate over residues 174-184 (PAGPPGPPGPP). Residues 186-198 (SSGHPGSPGSPGY) show a composition bias toward low complexity. Positions 228 to 240 (KDGESGRPGRPGE) are enriched in basic and acidic residues. The segment covering 250 to 259 (KGPAGIPGFP) has biased composition (low complexity). At K262 the chain carries 5-hydroxylysine; alternate. An O-linked (Gal...) hydroxylysine; alternate glycan is attached at K262. A compositionally biased stretch (basic and acidic residues) spans 265 to 276 (RGFDGRNGEKGE). Residue K283 is modified to 5-hydroxylysine. 2 stretches are compositionally biased toward low complexity: residues 310–321 (PGLPGAAGARGN) and 354–379 (PAGS…AGAQ). Positions 389 to 398 (GSPGGKGEMG) are enriched in gly residues. Low complexity-rich tracts occupy residues 399-429 (PAGI…QRGP) and 481-502 (PGER…PGEK). The span at 527–548 (GTPGGPGIRGMPGSPGGPGNDG) shows a compositional bias: gly residues. Low complexity-rich tracts occupy residues 606 to 615 (PAGKNGETGP) and 637 to 652 (QGLQ…PGEN). Positions 668-677 (GVPGGKGDSG) are enriched in gly residues. Positions 678-691 (APGERGPPGTAGTP) are enriched in low complexity. Positions 692–708 (GLRGGAGPPGPEGGKGP) are enriched in gly residues. The segment covering 709 to 718 (AGPPGPPGTS) has biased composition (pro residues). The span at 822-834 (AKGERGAPGEKGE) shows a compositional bias: basic and acidic residues. The span at 835 to 849 (GGPPGAAGPPGGSGP) shows a compositional bias: gly residues. K859 is modified (5-hydroxylysine). A compositionally biased stretch (gly residues) spans 863–879 (GSPGGPGAAGFPGGRGL). Positions 889-906 (PGPPGPSGAPGKDGPPGP) are enriched in pro residues. Low complexity-rich tracts occupy residues 907 to 934 (AGNS…KGPP) and 945 to 960 (PLGI…LAGP). K976 carries the 5-hydroxylysine modification. Positions 1045–1054 (PGHPGPPGPV) are enriched in pro residues. The segment covering 1068–1084 (PAGPSGAPGPAGARGAP) has biased composition (low complexity). A 5-hydroxylysine mark is found at K1093 and K1105. Over residues 1120 to 1132 (PGAAGHQGAVGSP) the composition is skewed to low complexity. A compositionally biased stretch (pro residues) spans 1180–1192 (PGQPGPPGPPGAP). The propeptide at 1219–1463 (DDPMDFKINT…GVDIGPVCFL (245 aa)) is C-terminal propeptide. Residues 1229 to 1463 (EEIMSSLKSV…GVDIGPVCFL (235 aa)) enclose the Fibrillar collagen NC1 domain. 3 cysteine pairs are disulfide-bonded: C1259–C1291, C1299–C1461, and C1369–C1414. D1277, N1279, Q1280, C1282, and D1285 together coordinate Ca(2+).

The protein belongs to the fibrillar collagen family. As to quaternary structure, trimers of identical alpha 1(III) chains. The chains are linked to each other by interchain disulfide bonds. Trimers are also cross-linked via hydroxylysines. Interacts with ADGRG1. In terms of processing, O-glycosylated. Post-translationally, prolines at the third position of the tripeptide repeating unit (G-X-Y) are hydroxylated in some or all of the chains.

The protein resides in the secreted. It is found in the extracellular space. Its subcellular location is the extracellular matrix. In terms of biological role, collagen type III occurs in most soft connective tissues along with type I collagen. Involved in regulation of cortical development. Is the major ligand of ADGRG1 in the developing brain and binding to ADGRG1 inhibits neuronal migration and activates the RhoA pathway by coupling ADGRG1 to GNA13 and possibly GNA12. In Rattus norvegicus (Rat), this protein is Collagen alpha-1(III) chain (Col3a1).